The sequence spans 338 residues: Heat shock factor 2-binding protein (338 aa).

Residues 1-20 (MAATVGDGSGTEEACRNMES) form a disordered region. A coiled-coil region spans residues 12 to 126 (EEACRNMESK…LLQQAEYCTQ (115 aa)). The tract at residues 18-55 (MESKEEFVKVRKKDLERLTTEVMQIRDFLPRILNGELL) is interaction with BRME1. An interaction with BRCA2 region spans residues 87–338 (ARLETAQADS…EDLRALDCNV (252 aa)).

Interacts (via C-terminus) with BNC1. Associates with HSF2. The interaction seems to occur between the trimerization domain of HSF2 and the N-terminal hydrophilic region of HSF2BP. Interacts (via N-terminus) with BRME1. Interacts with BRCA2 and BRME1; the interactions are direct and allow the formation of a ternary complex. The complex BRME1:HSF2BP:BRCA2 interacts with SPATA22, MEIOB and RAD51. Post-translationally, sumoylated by UBE2I in response to MEKK1-mediated stimuli. Expressed in testis and, to a lesser extent, in lung and muscle.

It is found in the cytoplasm. It localises to the chromosome. In terms of biological role, meiotic recombination factor component of recombination bridges involved in meiotic double-strand break repair. Modulates the localization of recombinases DMC1:RAD51 to meiotic double-strand break (DSB) sites through the interaction with BRCA2 and its recruitment during meiotic recombination. Indispensable for the DSB repair, homologous synapsis, and crossover formation that are needed for progression past metaphase I, is essential for spermatogenesis and male fertility. Required for proper recombinase recruitment in female meiosis. Inhibits BNC1 transcriptional activity during spermatogenesis, probably by sequestering it in the cytoplasm. May be involved in modulating HSF2 activation in testis. This chain is Heat shock factor 2-binding protein, found in Mus musculus (Mouse).